Reading from the N-terminus, the 198-residue chain is Na(+)-translocating NADH-quinone reductase subunit E (198 aa).

6 consecutive transmembrane segments (helical) span residues 11–31 (SIFI…FLAV), 39–59 (MGLG…NNLI), 77–97 (FLSF…LEMA), 110–130 (GIFL…SFMV), 140–160 (VVYG…MAGI), and 176–196 (LGIT…FSGI).

This sequence belongs to the NqrDE/RnfAE family. As to quaternary structure, composed of six subunits; NqrA, NqrB, NqrC, NqrD, NqrE and NqrF.

The protein resides in the cell inner membrane. It catalyses the reaction a ubiquinone + n Na(+)(in) + NADH + H(+) = a ubiquinol + n Na(+)(out) + NAD(+). In terms of biological role, NQR complex catalyzes the reduction of ubiquinone-1 to ubiquinol by two successive reactions, coupled with the transport of Na(+) ions from the cytoplasm to the periplasm. NqrA to NqrE are probably involved in the second step, the conversion of ubisemiquinone to ubiquinol. The polypeptide is Na(+)-translocating NADH-quinone reductase subunit E (Aeromonas hydrophila subsp. hydrophila (strain ATCC 7966 / DSM 30187 / BCRC 13018 / CCUG 14551 / JCM 1027 / KCTC 2358 / NCIMB 9240 / NCTC 8049)).